The chain runs to 247 residues: Putative ankyrin repeat protein RBE_1110 (247 aa).

2 ANK repeats span residues 105 to 135 and 139 to 171; these read QNKDVFYQAVMSNKKKLVKKILSYNPKCIDY and EGHNVLHIALKNKAKADAEMIEILLQCKPKLIT.

The polypeptide is Putative ankyrin repeat protein RBE_1110 (Rickettsia bellii (strain RML369-C)).